The primary structure comprises 390 residues: MRNWLLPEYIEDVLPRDAYRIEKIRRLVMDKLFVHGYQFVMPPLLEYVESLLAGSGSGMNLRMFKVVDQLSGRMMGLRADMTPQAARIDAHLLNTNGVTRLCYASSVVHTVPDEITRTREPFQVGAELYGHSGIESDLEIQRLLLECLSVSGIQSIHLDLGHIRVFRSLIYGSGIRPEFEMELYAALWAKDTSALRELVYTGLNDLDKTVREALLLLPELYGDETVLLRARKYLPNFPEIREALDQLEHVAKALEPYVDRIIFDLADLRGYHYHTGMVFAAYTQGSPVAIALGGRYDEIGKSFGRARPATGFSLDLKQLSRLTDINDYPRGILAPWKPQDDELAAMIKQLRIAGHIVVTELPGENSKEVARCDRNLVLRNGKWEICPVSG.

Belongs to the class-II aminoacyl-tRNA synthetase family. HisZ subfamily. In terms of assembly, heteromultimer composed of HisG and HisZ subunits.

The protein localises to the cytoplasm. The protein operates within amino-acid biosynthesis; L-histidine biosynthesis; L-histidine from 5-phospho-alpha-D-ribose 1-diphosphate: step 1/9. Functionally, required for the first step of histidine biosynthesis. May allow the feedback regulation of ATP phosphoribosyltransferase activity by histidine. In Nitrosomonas eutropha (strain DSM 101675 / C91 / Nm57), this protein is ATP phosphoribosyltransferase regulatory subunit.